The chain runs to 1042 residues: Exosome RNA helicase MTR4 (1042 aa).

Position 2 is an N-acetylalanine (Ala2). A disordered region spans residues Asp16–Pro74. A compositionally biased stretch (basic and acidic residues) spans Thr23 to Lys33. Lys24 participates in a covalent cross-link: Glycyl lysine isopeptide (Lys-Gly) (interchain with G-Cter in SUMO2). Ser40 carries the phosphoserine modification. Positions Lys43–Leu52 are enriched in basic and acidic residues. An N6-acetyllysine mark is found at Lys51 and Lys78. ATP is bound by residues Ile139, Ala161–Thr168, Ser164, Gly166, Lys167, and Thr168. A Helicase ATP-binding domain is found at Ile148–Cys304. A DEIH box motif is present at residues Asp252–His255. A Glycyl lysine isopeptide (Lys-Gly) (interchain with G-Cter in SUMO2) cross-link involves residue Lys358. The region spanning Gln405–Glu577 is the Helicase C-terminal domain. Residues Lys684 and Lys723 each participate in a glycyl lysine isopeptide (Lys-Gly) (interchain with G-Cter in SUMO2) cross-link.

It belongs to the helicase family. SKI2 subfamily. As to quaternary structure, component of a TRAMP-like complex, an ATP-dependent exosome regulatory complex consisting of a helicase (MTREX), an oligadenylate polymerase (TENT4B or TENT4A), and a substrate specific RNA-binding factor (ZCCHC7 or ZCCHC8). Several TRAMP-like complexes exist with specific compositions and are associated with nuclear, or nucleolar RNA exosomes. Identified in the spliceosome C complex. Component of the poly(A) tail exosome targeting (PAXT) complex made of PABPN1, ZFC3H1 and MTREX that directs a subset of long and polyadenylated poly(A) RNAs for exosomal degradation. Component of the nuclear exosome targeting (NEXT) complex composed of MTREX, ZCCHC8, and RBM7 that directs a subset of non-coding short-lived RNAs for exosomal degradation. Interacts with ZCCHC8; this interaction bridges the interaction between RBM7 and MTREX. Binds to ZFC3H1 and RBM7 in a RNase-insensitive manner. Interacts with EXOSC10; the interaction mediates the association of MTREX with nuclear RNA exosomes. Interacts with isoform 1 of NVL in an ATP-dependent manner; the interaction is required to associate NVL with nuclear RNA exosome. Interacts with WDR74; the interaction dissociation in a late stage of rRNA synthesis is required for appropriate maturation of pre-60S particles and depends on the ATPase activity of NVL. Interacts with MPHOSPH6. Interacts with the RNA cap-binding complex proteins NCBP1 and SRRT. Interacts with NRDE2; the interaction is direct and negatively regulates MTREX function in exosomal degradation by changing its conformation precluding interaction with ZFC3H1, the RNA cap-binding complex proteins NCBP1 and SRRT, and association with the exosome. Associates with the RNA exosome complex.

It is found in the nucleus. It localises to the nucleoplasm. The protein localises to the nucleolus. The protein resides in the nucleus speckle. The catalysed reaction is ATP + H2O = ADP + phosphate + H(+). Its activity is regulated as follows. Activated when MTREX is incorporated into NEXT complex an the nuclear RNA exosome complex. Functionally, catalyzes the ATP-dependent unwinding of RNA duplexes with a single-stranded 3' RNA extension. Central subunit of many protein complexes, namely TRAMP-like, nuclear exosome targeting (NEXT) and poly(A) tail exosome targeting (PAXT). NEXT functions as an RNA exosome cofactor that directs a subset of non-coding short-lived RNAs for exosomal degradation. NEXT is involved in surveillance and turnover of aberrant transcripts and non-coding RNAs. PAXT directs a subset of long and polyadenylated poly(A) RNAs for exosomal degradation. The RNA exosome is fundamental for the degradation of RNA in eukaryotic nuclei. Substrate targeting is facilitated by its cofactor ZCCHC8, which links to RNA-binding protein adapters. Associated with the RNA exosome complex and involved in the 3'-processing of the 7S pre-RNA to the mature 5.8S rRNA. May be involved in pre-mRNA splicing. In the context of NEXT complex can also in vitro unwind DNA:RNA heteroduplexes with a 3' poly (A) RNA tracking strand. Can promote unwinding and degradation of structured RNA substrates when associated with the nuclear exosome and its cofactors. Can displace a DNA strand while translocating on RNA to ultimately degrade the RNA within a DNA/RNA heteroduplex. Plays a role in DNA damage response. This is Exosome RNA helicase MTR4 from Homo sapiens (Human).